The following is a 318-amino-acid chain: Formimidoylglutamase (318 aa).

His130, Asp155, His157, Asp159, Asp246, and Asp248 together coordinate Mn(2+).

The protein belongs to the arginase family. Requires Mn(2+) as cofactor.

The catalysed reaction is N-formimidoyl-L-glutamate + H2O = formamide + L-glutamate. Its pathway is amino-acid degradation; L-histidine degradation into L-glutamate; L-glutamate from N-formimidoyl-L-glutamate (hydrolase route): step 1/1. Its function is as follows. Catalyzes the conversion of N-formimidoyl-L-glutamate to L-glutamate and formamide. This chain is Formimidoylglutamase, found in Klebsiella pneumoniae subsp. pneumoniae (strain ATCC 700721 / MGH 78578).